Consider the following 187-residue polypeptide: Large ribosomal subunit protein uL5 (187 aa).

It belongs to the universal ribosomal protein uL5 family. As to quaternary structure, part of the 50S ribosomal subunit; part of the 5S rRNA/L5/L18/L25 subcomplex. Contacts the 5S rRNA and the P site tRNA. Forms a bridge to the 30S subunit in the 70S ribosome.

Functionally, this is one of the proteins that bind and probably mediate the attachment of the 5S RNA into the large ribosomal subunit, where it forms part of the central protuberance. In the 70S ribosome it contacts protein S13 of the 30S subunit (bridge B1b), connecting the 2 subunits; this bridge is implicated in subunit movement. Contacts the P site tRNA; the 5S rRNA and some of its associated proteins might help stabilize positioning of ribosome-bound tRNAs. In Nocardia farcinica (strain IFM 10152), this protein is Large ribosomal subunit protein uL5.